We begin with the raw amino-acid sequence, 805 residues long: Translation initiation factor IF-2 (805 aa).

2 disordered regions span residues 68 to 89 (VVTEQAQAPAEVEEKKEEEKKE) and 141 to 215 (KEKE…KEKK). Residues 79 to 89 (VEEKKEEEKKE) are compositionally biased toward basic and acidic residues. Residues 306–474 (PRPPIVVVMG…MILLLADILE (169 aa)) enclose the tr-type G domain. The tract at residues 315–322 (GHVDHGKT) is G1. A GTP-binding site is contributed by 315-322 (GHVDHGKT). The G2 stretch occupies residues 340-344 (GITQH). The tract at residues 362–365 (DTPG) is G3. GTP-binding positions include 362 to 366 (DTPGH) and 416 to 419 (NKID). Positions 416 to 419 (NKID) are G4. Positions 452-454 (SAK) are G5.

Belongs to the TRAFAC class translation factor GTPase superfamily. Classic translation factor GTPase family. IF-2 subfamily.

It is found in the cytoplasm. Functionally, one of the essential components for the initiation of protein synthesis. Protects formylmethionyl-tRNA from spontaneous hydrolysis and promotes its binding to the 30S ribosomal subunits. Also involved in the hydrolysis of GTP during the formation of the 70S ribosomal complex. This chain is Translation initiation factor IF-2 (infB), found in Aquifex aeolicus (strain VF5).